The following is an 88-amino-acid chain: Conotoxin Ca8.3 (88 aa).

Residues 1-21 (MMLKMGAMFVLLLLFILPSSQ) form the signal peptide. Positions 22 to 46 (QEGDVQARKTHLKSGFYGTLAMSTR) are excised as a propeptide.

The protein belongs to the conotoxin S superfamily. In terms of processing, contains 5 disulfide bonds. Expressed by the venom duct.

The protein resides in the secreted. The sequence is that of Conotoxin Ca8.3 from Conus caracteristicus (Characteristic cone).